A 289-amino-acid chain; its full sequence is Acetyl-coenzyme A carboxylase carboxyl transferase subunit beta (289 aa).

The CoA carboxyltransferase N-terminal domain maps to 34–289 (MWVKCNKCGD…KLINMHQNSF (256 aa)). Residues Cys38, Cys41, Cys57, and Cys60 each contribute to the Zn(2+) site. Residues 38-60 (CNKCGDILYQNDLEKNYMVCNLC) form a C4-type zinc finger.

This sequence belongs to the AccD/PCCB family. Acetyl-CoA carboxylase is a heterohexamer composed of biotin carboxyl carrier protein (AccB), biotin carboxylase (AccC) and two subunits each of ACCase subunit alpha (AccA) and ACCase subunit beta (AccD). Requires Zn(2+) as cofactor.

The protein localises to the cytoplasm. It catalyses the reaction N(6)-carboxybiotinyl-L-lysyl-[protein] + acetyl-CoA = N(6)-biotinyl-L-lysyl-[protein] + malonyl-CoA. It functions in the pathway lipid metabolism; malonyl-CoA biosynthesis; malonyl-CoA from acetyl-CoA: step 1/1. In terms of biological role, component of the acetyl coenzyme A carboxylase (ACC) complex. Biotin carboxylase (BC) catalyzes the carboxylation of biotin on its carrier protein (BCCP) and then the CO(2) group is transferred by the transcarboxylase to acetyl-CoA to form malonyl-CoA. This chain is Acetyl-coenzyme A carboxylase carboxyl transferase subunit beta, found in Clostridium botulinum (strain Langeland / NCTC 10281 / Type F).